We begin with the raw amino-acid sequence, 31 residues long: Chassatide C5 (31 aa).

Positions 1–31 (GVIPCGESCVFIPCISSVVGCSCKNKVCYRN) form a cross-link, cyclopeptide (Gly-Asn). Disulfide bonds link C5-C21, C9-C23, and C14-C28.

In terms of processing, this is a cyclic peptide. Expressed in pedicel, root and stem but not in leaf and fruit (at protein level).

In terms of biological role, probably participates in a plant defense mechanism. In Chassalia chartacea (Chassalia curviflora), this protein is Chassatide C5.